A 323-amino-acid chain; its full sequence is Staphylococcal-like nuclease CAN1 (323 aa).

Glycine 2 carries the N-myristoyl glycine lipid modification. Cysteine 11 carries the S-palmitoyl cysteine lipid modification. The TNase-like domain maps to 130-306 (NTLPVDTKSV…RQKRVGLWAS (177 aa)). Residue aspartate 143 coordinates Ca(2+). Arginine 213 is a catalytic residue. A Ca(2+)-binding site is contributed by aspartate 218. Active-site residues include glutamate 221 and arginine 255.

Belongs to the thermonuclease family. Requires Ca(2+) as cofactor.

It localises to the cell membrane. With respect to regulation, inhibited by Zn(2+). Its function is as follows. Enzyme that catalyzes the hydrolysis of both DNA and RNA at the 5' position of the phosphodiester bond. Possesses activity toward the single-stranded DNA, double-stranded DNA and RNA. May be involved in genomic DNA degradation during programmed cell death. This Arabidopsis thaliana (Mouse-ear cress) protein is Staphylococcal-like nuclease CAN1 (CAN1).